Reading from the N-terminus, the 442-residue chain is tRNA-2-methylthio-N(6)-dimethylallyladenosine synthase (442 aa).

Residues 2–120 (KKVFIRTFGC…LPKMIVDKET (119 aa)) enclose the MTTase N-terminal domain. Residues Cys11, Cys49, Cys83, Cys157, Cys161, and Cys164 each contribute to the [4Fe-4S] cluster site. Residues 143–375 (RVEGGAAFVS…NEVIEAETAR (233 aa)) form the Radical SAM core domain. Positions 378–441 (QTMIGTVQRC…TFSLRGKIVE (64 aa)) constitute a TRAM domain.

It belongs to the methylthiotransferase family. MiaB subfamily. As to quaternary structure, monomer. [4Fe-4S] cluster serves as cofactor.

The protein resides in the cytoplasm. It catalyses the reaction N(6)-dimethylallyladenosine(37) in tRNA + (sulfur carrier)-SH + AH2 + 2 S-adenosyl-L-methionine = 2-methylsulfanyl-N(6)-dimethylallyladenosine(37) in tRNA + (sulfur carrier)-H + 5'-deoxyadenosine + L-methionine + A + S-adenosyl-L-homocysteine + 2 H(+). Its function is as follows. Catalyzes the methylthiolation of N6-(dimethylallyl)adenosine (i(6)A), leading to the formation of 2-methylthio-N6-(dimethylallyl)adenosine (ms(2)i(6)A) at position 37 in tRNAs that read codons beginning with uridine. The chain is tRNA-2-methylthio-N(6)-dimethylallyladenosine synthase from Neisseria gonorrhoeae (strain NCCP11945).